Consider the following 299-residue polypeptide: Zinc-alpha-2-glycoprotein (299 aa).

The N-terminal stretch at 1–17 (MVPVLLALLLLLGPAVS) is a signal peptide. N-linked (GlcNAc...) asparagine glycans are attached at residues N24, N125, and N256. 2 disulfide bridges follow: C120-C183 and C222-C277. An Ig-like C1-type domain is found at 204–289 (PSVSVTGHAA…EHRSLTRPLT (86 aa)).

The protein belongs to the MHC class I family. In terms of assembly, interacts with PIP.

The protein localises to the secreted. Functionally, stimulates lipid degradation in adipocytes and causes the extensive fat losses associated with some advanced cancers. This Bos taurus (Bovine) protein is Zinc-alpha-2-glycoprotein (AZGP1).